Reading from the N-terminus, the 71-residue chain is Conotoxin Vc6.12 (71 aa).

Residues Met1 to Ala19 form the signal peptide. The propeptide occupies Leu20 to Gln43. 3 disulfides stabilise this stretch: Cys48/Cys62, Cys55/Cys66, and Cys61/Cys70.

This sequence belongs to the conotoxin O2 superfamily. In terms of tissue distribution, expressed by the venom duct.

It is found in the secreted. Functionally, inhibits voltage-gated ion channels. This chain is Conotoxin Vc6.12, found in Conus victoriae (Queen Victoria cone).